The following is a 98-amino-acid chain: snRNA-activating protein complex subunit 5 (98 aa).

The tract at residues 75–98 (ALELSTRSHVQEEEEEEEEEEEDS) is disordered. The segment covering 86-98 (EEEEEEEEEEEDS) has biased composition (acidic residues).

Part of the SNAPc complex composed of 5 subunits: SNAPC1, SNAPC2, SNAPC3, SNAPC4 and SNAPC5. SNAPC5 interacts with SNAPC4.

It is found in the nucleus. In terms of biological role, part of the SNAPc complex required for the transcription of both RNA polymerase II and III small-nuclear RNA genes. Binds to the proximal sequence element (PSE), a non-TATA-box basal promoter element common to these 2 types of genes. Recruits TBP and BRF2 to the U6 snRNA TATA box. The protein is snRNA-activating protein complex subunit 5 (SNAPC5) of Bos taurus (Bovine).